The sequence spans 301 residues: MSVREKMLEILEGIDIRFKEPLHSYSYTKVGGEPDYLVFPRNRCELARLKRFSNQEHIPWMVLGNASNIIVRDGGIRGFVILCDKLNNVSVDGYTIEAEAGANLIETTRIALRHSLTGFEFACGIPGSVGGAVFMNAGAYGGEIAHILQSCKVLTKDGEIETLSAKDLAFGYRHSAIQESGSVVLSAKFALAPGTHQVIKQEMDRLTHLRELKQPLEYPSCGSVFKRPVGHFAGQLISEAGLKGYRIGGVEVSEKHAGFMINVADGTAKDYEDLIESVIEKVKEHSGVTLEREVRILGESK.

In terms of domain architecture, FAD-binding PCMH-type spans 30–194 (VGGEPDYLVF…LSAKFALAPG (165 aa)). The active site involves Arg173. Ser223 (proton donor) is an active-site residue. Residue Glu293 is part of the active site.

This sequence belongs to the MurB family. The cofactor is FAD.

The protein localises to the cytoplasm. The catalysed reaction is UDP-N-acetyl-alpha-D-muramate + NADP(+) = UDP-N-acetyl-3-O-(1-carboxyvinyl)-alpha-D-glucosamine + NADPH + H(+). It participates in cell wall biogenesis; peptidoglycan biosynthesis. Its function is as follows. Cell wall formation. This Streptococcus pneumoniae (strain CGSP14) protein is UDP-N-acetylenolpyruvoylglucosamine reductase.